The sequence spans 193 residues: DNA damage-inducible transcript 4-like protein (193 aa).

The protein belongs to the DDIT4 family.

It localises to the cytoplasm. Inhibits cell growth by regulating the TOR signaling pathway upstream of the TSC1-TSC2 complex and downstream of AKT1. The sequence is that of DNA damage-inducible transcript 4-like protein (DDIT4L) from Bos taurus (Bovine).